A 176-amino-acid polypeptide reads, in one-letter code: MTGNIDQLMKDMARDLLGEDVIDVLSFLLDNKTELTDEEMANKLNVKVNEVRKKLYALAEHGLVSYRRTRDKETGWYVYYWKANVDQINELLLSRKREILNKLKARLEYETNNEFYICPEDKTKYTFEEAFENEFKCPKCGVQLVYYDSAKMREFLERKIKEIEEEIARETKVGSS.

The HTH TFE/IIEalpha-type domain occupies 5–89 (IDQLMKDMAR…YWKANVDQIN (85 aa)).

Belongs to the TFE family. Monomer. Interaction with RNA polymerase subunits RpoF and RpoE is necessary for Tfe stimulatory transcription activity. Able to interact with Tbp and RNA polymerase in the absence of DNA promoter. Interacts both with the preinitiation and elongation complexes.

Its function is as follows. Transcription factor that plays a role in the activation of archaeal genes transcribed by RNA polymerase. Facilitates transcription initiation by enhancing TATA-box recognition by TATA-box-binding protein (Tbp), and transcription factor B (Tfb) and RNA polymerase recruitment. Not absolutely required for transcription in vitro, but particularly important in cases where Tbp or Tfb function is not optimal. It dynamically alters the nucleic acid-binding properties of RNA polymerases by stabilizing the initiation complex and destabilizing elongation complexes. Seems to translocate with the RNA polymerase following initiation and acts by binding to the non template strand of the transcription bubble in elongation complexes. The sequence is that of Transcription factor E from Metallosphaera sedula (strain ATCC 51363 / DSM 5348 / JCM 9185 / NBRC 15509 / TH2).